Reading from the N-terminus, the 64-residue chain is Beta-defensin 1 (64 aa).

The signal sequence occupies residues 1 to 22; that stretch reads MRLHHLLLVLFFVVLSAGSGFT. 3 cysteine pairs are disulfide-bonded: Cys31/Cys60, Cys38/Cys53, and Cys43/Cys61.

The protein belongs to the beta-defensin family. In terms of assembly, monomer. Homodimer.

It localises to the secreted. Its subcellular location is the membrane. Has bactericidal activity. May act as a ligand for C-C chemokine receptor CCR6. Positively regulates the sperm motility and bactericidal activity in a CCR6-dependent manner. Binds to CCR6 and triggers Ca2+ mobilization in the sperm which is important for its motility. The protein is Beta-defensin 1 (DEFB1) of Ovis aries (Sheep).